Reading from the N-terminus, the 202-residue chain is Outer-membrane lipoprotein carrier protein (202 aa).

The N-terminal stretch at Met-1–Ser-18 is a signal peptide.

This sequence belongs to the LolA family. As to quaternary structure, monomer.

It localises to the periplasm. Its function is as follows. Participates in the translocation of lipoproteins from the inner membrane to the outer membrane. Only forms a complex with a lipoprotein if the residue after the N-terminal Cys is not an aspartate (The Asp acts as a targeting signal to indicate that the lipoprotein should stay in the inner membrane). The sequence is that of Outer-membrane lipoprotein carrier protein from Legionella pneumophila (strain Lens).